The following is a 448-amino-acid chain: tRNA-2-methylthio-N(6)-dimethylallyladenosine synthase (448 aa).

The 118-residue stretch at K3–G120 folds into the MTTase N-terminal domain. 6 residues coordinate [4Fe-4S] cluster: C12, C49, C83, C158, C162, and C165. One can recognise a Radical SAM core domain in the interval T144–Q376. Residues R379 to S444 enclose the TRAM domain.

Belongs to the methylthiotransferase family. MiaB subfamily. As to quaternary structure, monomer. [4Fe-4S] cluster serves as cofactor.

The protein resides in the cytoplasm. The enzyme catalyses N(6)-dimethylallyladenosine(37) in tRNA + (sulfur carrier)-SH + AH2 + 2 S-adenosyl-L-methionine = 2-methylsulfanyl-N(6)-dimethylallyladenosine(37) in tRNA + (sulfur carrier)-H + 5'-deoxyadenosine + L-methionine + A + S-adenosyl-L-homocysteine + 2 H(+). In terms of biological role, catalyzes the methylthiolation of N6-(dimethylallyl)adenosine (i(6)A), leading to the formation of 2-methylthio-N6-(dimethylallyl)adenosine (ms(2)i(6)A) at position 37 in tRNAs that read codons beginning with uridine. The chain is tRNA-2-methylthio-N(6)-dimethylallyladenosine synthase from Chromohalobacter salexigens (strain ATCC BAA-138 / DSM 3043 / CIP 106854 / NCIMB 13768 / 1H11).